The chain runs to 229 residues: NAD(P)H-quinone oxidoreductase subunit K, chloroplastic (229 aa).

Positions 43, 44, 108, and 139 each coordinate [4Fe-4S] cluster.

The protein belongs to the complex I 20 kDa subunit family. In terms of assembly, NDH is composed of at least 16 different subunits, 5 of which are encoded in the nucleus. Requires [4Fe-4S] cluster as cofactor.

It is found in the plastid. The protein localises to the chloroplast thylakoid membrane. It carries out the reaction a plastoquinone + NADH + (n+1) H(+)(in) = a plastoquinol + NAD(+) + n H(+)(out). The enzyme catalyses a plastoquinone + NADPH + (n+1) H(+)(in) = a plastoquinol + NADP(+) + n H(+)(out). Functionally, NDH shuttles electrons from NAD(P)H:plastoquinone, via FMN and iron-sulfur (Fe-S) centers, to quinones in the photosynthetic chain and possibly in a chloroplast respiratory chain. The immediate electron acceptor for the enzyme in this species is believed to be plastoquinone. Couples the redox reaction to proton translocation, and thus conserves the redox energy in a proton gradient. This chain is NAD(P)H-quinone oxidoreductase subunit K, chloroplastic, found in Aethionema cordifolium (Lebanon stonecress).